A 314-amino-acid polypeptide reads, in one-letter code: MKAKIVPEKTNLHPRNLHKFGYDFEALTTCSSELKNHVFTNEYDTQTINFSNPEAVKALNNALLIAYYNIKNWGIPQDYLCPPIPGRADYLHYIADLLATTNNQIIPEGENVIGLDIGIGANCIYPIIGNAIYDWSFVGTDIDEKAIQNCKKIIENNPKLIDAISLQQQVESRFIFKNIILTDDKFAFTICNPPFHNSAAEATKSSARKVNNLQEIRTKNPVLNFGGQNTELWCDGGEIGFITQMIYESAKYPMQVLWFTTLVSKRENLSSIYKTLNKVSAVEIKTIDMAQGQKNSRIVAWTFLSELQQKAWRF.

Belongs to the methyltransferase superfamily. METTL16/RlmF family.

The protein localises to the cytoplasm. The enzyme catalyses adenosine(1618) in 23S rRNA + S-adenosyl-L-methionine = N(6)-methyladenosine(1618) in 23S rRNA + S-adenosyl-L-homocysteine + H(+). Functionally, specifically methylates the adenine in position 1618 of 23S rRNA. This chain is Ribosomal RNA large subunit methyltransferase F, found in Flavobacterium psychrophilum (strain ATCC 49511 / DSM 21280 / CIP 103535 / JIP02/86).